Reading from the N-terminus, the 117-residue chain is Non-specific lipid-transfer protein 2B (117 aa).

A signal peptide spans 1-25 (MARAQLVLVALVAALLLAGPHTTMA). 4 disulfide bridges follow: C29/C76, C39/C53, C54/C99, and C74/C113.

This sequence belongs to the plant LTP family. As to expression, expressed in roots, mesocotyls and developing leaves.

Functionally, plant non-specific lipid-transfer proteins transfer phospholipids as well as galactolipids across membranes. May play a role in wax or cutin deposition in the cell walls of expanding epidermal cells and certain secretory tissues. The protein is Non-specific lipid-transfer protein 2B (LTP2-B) of Oryza sativa subsp. japonica (Rice).